A 703-amino-acid polypeptide reads, in one-letter code: Polyribonucleotide nucleotidyltransferase (703 aa).

Residues Asp-485 and Asp-491 each contribute to the Mg(2+) site. Positions 552-611 constitute a KH domain; it reads PRIYTLKIDQDKIRDVIGKGGAMIRSITEASDTNIEIEDDGTIKIFATERAKADIAISKI. Residues 621–689 enclose the S1 motif domain; the sequence is GKTYEGKVTR…RQNRVRLSIK (69 aa).

Belongs to the polyribonucleotide nucleotidyltransferase family. Component of the RNA degradosome, which is a multiprotein complex involved in RNA processing and mRNA degradation. Mg(2+) serves as cofactor.

Its subcellular location is the cytoplasm. The catalysed reaction is RNA(n+1) + phosphate = RNA(n) + a ribonucleoside 5'-diphosphate. Involved in mRNA degradation. Catalyzes the phosphorolysis of single-stranded polyribonucleotides processively in the 3'- to 5'-direction. The chain is Polyribonucleotide nucleotidyltransferase from Pseudoalteromonas atlantica (strain T6c / ATCC BAA-1087).